We begin with the raw amino-acid sequence, 340 residues long: Ketol-acid reductoisomerase (NADP(+)) (340 aa).

One can recognise a KARI N-terminal Rossmann domain in the interval 1-182 (MRVYYDRDCD…GGGRSGIIET (182 aa)). NADP(+) contacts are provided by residues 24-27 (YGSQ), arginine 48, serine 51, serine 53, and 83-86 (DELQ). The active site involves histidine 108. Glycine 134 lines the NADP(+) pocket. Positions 183–329 (NFREECETDL…ETLRGMMPWI (147 aa)) constitute a KARI C-terminal knotted domain. Residues aspartate 191, glutamate 195, glutamate 227, and glutamate 231 each coordinate Mg(2+). Serine 252 contributes to the substrate binding site.

The protein belongs to the ketol-acid reductoisomerase family. It depends on Mg(2+) as a cofactor.

It carries out the reaction (2R)-2,3-dihydroxy-3-methylbutanoate + NADP(+) = (2S)-2-acetolactate + NADPH + H(+). The catalysed reaction is (2R,3R)-2,3-dihydroxy-3-methylpentanoate + NADP(+) = (S)-2-ethyl-2-hydroxy-3-oxobutanoate + NADPH + H(+). It functions in the pathway amino-acid biosynthesis; L-isoleucine biosynthesis; L-isoleucine from 2-oxobutanoate: step 2/4. The protein operates within amino-acid biosynthesis; L-valine biosynthesis; L-valine from pyruvate: step 2/4. Functionally, involved in the biosynthesis of branched-chain amino acids (BCAA). Catalyzes an alkyl-migration followed by a ketol-acid reduction of (S)-2-acetolactate (S2AL) to yield (R)-2,3-dihydroxy-isovalerate. In the isomerase reaction, S2AL is rearranged via a Mg-dependent methyl migration to produce 3-hydroxy-3-methyl-2-ketobutyrate (HMKB). In the reductase reaction, this 2-ketoacid undergoes a metal-dependent reduction by NADPH to yield (R)-2,3-dihydroxy-isovalerate. The sequence is that of Ketol-acid reductoisomerase (NADP(+)) from Roseobacter denitrificans (strain ATCC 33942 / OCh 114) (Erythrobacter sp. (strain OCh 114)).